Consider the following 459-residue polypeptide: MTCDVSPLFGTDGIRGRANFEPMTVETSVLLGKAVAGVLLERHSGKHRVVVGKDTRLSGYMFENALIAGLTSMGIETLMLGPIPTPGVAFITRAYRADAGIMISASHNPYRDNGIKIFSSDGFKIGQAVEERIEAMIASKSFGGLPEDHAVGKNKRVKDAMGRYIEYAKATFPKGRTLKGLRIVLDCAHGAAYRVAPSVFEELDAEVICYGCEPSGCNINEGCGALWPSIIQKAVIEHEADVGIALDGDGDRLIMVDEKGHIVDGDMLLSICASDLKRRQALPENRVVATVMTNFGVLRYLESLGIQVTISPVGDRHVLQHMLETKAILGGEQSGHMIFLDYNTTGDGIVSALQVLRIMIESESTLSDLTACIVKSPQSLINVPVAKKVPLDSLSNVQVVLQEVKEILGDSGRILLRYSGTENICRVMVEGTKKHQVDSLAKTIVDVVEAEIGGAEISE.

S106 (phosphoserine intermediate) is an active-site residue. Residues S106, D247, D249, and D251 each coordinate Mg(2+). S106 bears the Phosphoserine mark.

Belongs to the phosphohexose mutase family. Mg(2+) is required as a cofactor. Post-translationally, activated by phosphorylation.

It carries out the reaction alpha-D-glucosamine 1-phosphate = D-glucosamine 6-phosphate. Its function is as follows. Catalyzes the conversion of glucosamine-6-phosphate to glucosamine-1-phosphate. This is Phosphoglucosamine mutase from Chlamydia muridarum (strain MoPn / Nigg).